The primary structure comprises 215 residues: Cytochrome b6 (215 aa).

Residues 32 to 52 (IFYCFGGITLTCFLIQVATGF) form a helical membrane-spanning segment. Cys-35 lines the heme c pocket. 2 residues coordinate heme b: His-86 and His-100. A run of 3 helical transmembrane segments spans residues 90 to 110 (ASMMVMMLILHVFRVYLTGGF), 116 to 136 (LTWVTGVILAVITVSFGVTGY), and 186 to 206 (LHTFVLPLLTAVFMLMHFLMI). Heme b is bound by residues His-187 and His-202.

Belongs to the cytochrome b family. PetB subfamily. In terms of assembly, the 4 large subunits of the cytochrome b6-f complex are cytochrome b6, subunit IV (17 kDa polypeptide, PetD), cytochrome f and the Rieske protein, while the 4 small subunits are PetG, PetL, PetM and PetN. The complex functions as a dimer. Requires heme b as cofactor. Heme c is required as a cofactor.

It is found in the plastid. The protein localises to the chloroplast thylakoid membrane. Functionally, component of the cytochrome b6-f complex, which mediates electron transfer between photosystem II (PSII) and photosystem I (PSI), cyclic electron flow around PSI, and state transitions. The sequence is that of Cytochrome b6 from Nephroselmis olivacea (Green alga).